Reading from the N-terminus, the 714-residue chain is Polyribonucleotide nucleotidyltransferase (714 aa).

D489 and D495 together coordinate Mg(2+). Residues P556–I615 enclose the KH domain. One can recognise an S1 motif domain in the interval G625–K693. The disordered stretch occupies residues S691 to D714. Residues P700–D714 are compositionally biased toward basic and acidic residues.

This sequence belongs to the polyribonucleotide nucleotidyltransferase family. It depends on Mg(2+) as a cofactor.

It localises to the cytoplasm. The enzyme catalyses RNA(n+1) + phosphate = RNA(n) + a ribonucleoside 5'-diphosphate. Its function is as follows. Involved in mRNA degradation. Catalyzes the phosphorolysis of single-stranded polyribonucleotides processively in the 3'- to 5'-direction. This is Polyribonucleotide nucleotidyltransferase from Streptococcus equi subsp. zooepidemicus (strain H70).